The primary structure comprises 467 residues: Sialic acid-binding Ig-like lectin 7 (467 aa).

The signal sequence occupies residues 1–18; sequence MLLLLLLPLLWGRERVEG. Topologically, residues 19 to 353 are extracellular; it reads QKSNRKDYSL…KMRPVSGVLL (335 aa). Residues 39 to 122 enclose the Ig-like V-type domain; it reads GMCVHVRCSF…ARMSDAGRYF (84 aa). A disulfide bridge links C46 with C106. N105 carries an N-linked (GlcNAc...) asparagine glycan. Residues R124 and 131–135 each bind N-acetylneuraminate; that span reads KWNYK. Residues N142 and N165 are each glycosylated (N-linked (GlcNAc...) asparagine). An Ig-like C2-type 1 domain is found at 150 to 233; that stretch reads PNILIPGTLE…AGVTTNRTIQ (84 aa). An intrachain disulfide couples C168 to C217. Residues N229, N235, N242, and N260 are each glycosylated (N-linked (GlcNAc...) asparagine). The Ig-like C2-type 2 domain maps to 240-336; the sequence is PQNLTVTVFQ…GSQHVSLNLS (97 aa). A disulfide bridge links C276 with C320. An N-linked (GlcNAc...) asparagine glycan is attached at N334. The chain crosses the membrane as a helical span at residues 354 to 376; the sequence is GAVGGAGATALVFLSFCVIFIVV. The Cytoplasmic segment spans residues 377–467; the sequence is RSCRKKSARP…NEYSEIKIPK (91 aa). Residues 401 to 412 are compositionally biased toward polar residues; the sequence is IRGSASQGNLTE. Residues 401-431 form a disordered region; sequence IRGSASQGNLTESWADDNPRHHGLAAHSSGE. Position 429 is a phosphoserine (S429). The ITIM motif signature appears at 435-440; sequence IQYAPL. The disordered stretch occupies residues 443–467; it reads HKGEPQDLSGQEATNNEYSEIKIPK. Residues 450–460 are compositionally biased toward polar residues; the sequence is LSGQEATNNEY.

The protein belongs to the immunoglobulin superfamily. SIGLEC (sialic acid binding Ig-like lectin) family. Interacts with PTPN6/SHP-1 upon phosphorylation. Tyrosine phosphorylated. In terms of tissue distribution, predominantly expressed by resting and activated natural killer cells and at lower levels by granulocytes and monocytes. High expression found in placenta, liver, lung, spleen, and peripheral blood leukocytes.

The protein resides in the membrane. Putative adhesion molecule that mediates sialic-acid dependent binding to cells. Preferentially binds to alpha-2,3- and alpha-2,6-linked sialic acid. Also binds disialogangliosides (disialogalactosyl globoside, disialyl lactotetraosylceramide and disialyl GalNAc lactotetraoslylceramide). The sialic acid recognition site may be masked by cis interactions with sialic acids on the same cell surface. In the immune response, may act as an inhibitory receptor upon ligand induced tyrosine phosphorylation by recruiting cytoplasmic phosphatase(s) via their SH2 domain(s) that block signal transduction through dephosphorylation of signaling molecules. Mediates inhibition of natural killer cells cytotoxicity. May play a role in hemopoiesis. Inhibits differentiation of CD34+ cell precursors towards myelomonocytic cell lineage and proliferation of leukemic myeloid cells (in vitro). This Homo sapiens (Human) protein is Sialic acid-binding Ig-like lectin 7 (SIGLEC7).